Reading from the N-terminus, the 170-residue chain is UPF0161 protein At3g09310 (170 aa).

Disordered regions lie at residues 49–70 and 147–170; these read CLSAKSTPSKPDPASPQDGEEL and SGIKLREGDEEEEDNYDDEDQRKI. Acidic residues predominate over residues 154 to 170; it reads GDEEEEDNYDDEDQRKI.

This sequence belongs to the UPF0161 family.

The polypeptide is UPF0161 protein At3g09310 (Arabidopsis thaliana (Mouse-ear cress)).